The primary structure comprises 492 residues: Ketol-acid reductoisomerase (NADP(+)) (492 aa).

In terms of domain architecture, KARI N-terminal Rossmann spans 14–208; sequence LDQLGRCRFM…GGHKAGVLES (195 aa). NADP(+) is bound by residues 45–48, arginine 68, arginine 76, serine 78, and 108–110; these read CGAQ and DKQ. Histidine 132 is a catalytic residue. Glycine 158 serves as a coordination point for NADP(+). KARI C-terminal knotted domains are found at residues 209–344 and 345–485; these read SFVA…NAPK and YDGK…MTDM. Mg(2+)-binding residues include aspartate 217, glutamate 221, glutamate 389, and glutamate 393. Serine 414 lines the substrate pocket.

Belongs to the ketol-acid reductoisomerase family. Mg(2+) is required as a cofactor.

The catalysed reaction is (2R)-2,3-dihydroxy-3-methylbutanoate + NADP(+) = (2S)-2-acetolactate + NADPH + H(+). The enzyme catalyses (2R,3R)-2,3-dihydroxy-3-methylpentanoate + NADP(+) = (S)-2-ethyl-2-hydroxy-3-oxobutanoate + NADPH + H(+). It functions in the pathway amino-acid biosynthesis; L-isoleucine biosynthesis; L-isoleucine from 2-oxobutanoate: step 2/4. Its pathway is amino-acid biosynthesis; L-valine biosynthesis; L-valine from pyruvate: step 2/4. In terms of biological role, involved in the biosynthesis of branched-chain amino acids (BCAA). Catalyzes an alkyl-migration followed by a ketol-acid reduction of (S)-2-acetolactate (S2AL) to yield (R)-2,3-dihydroxy-isovalerate. In the isomerase reaction, S2AL is rearranged via a Mg-dependent methyl migration to produce 3-hydroxy-3-methyl-2-ketobutyrate (HMKB). In the reductase reaction, this 2-ketoacid undergoes a metal-dependent reduction by NADPH to yield (R)-2,3-dihydroxy-isovalerate. This chain is Ketol-acid reductoisomerase (NADP(+)), found in Haemophilus influenzae (strain 86-028NP).